The chain runs to 301 residues: GTPase Era (301 aa).

Positions 7–175 (YCGFIAIVGR…AAIVRKHLPE (169 aa)) constitute an Era-type G domain. The tract at residues 15 to 22 (GRPNVGKS) is G1. 15 to 22 (GRPNVGKS) provides a ligand contact to GTP. A G2 region spans residues 41–45 (QTTRH). A G3 region spans residues 62 to 65 (DTPG). Residues 62–66 (DTPGL) and 124–127 (NKVD) each bind GTP. Residues 124–127 (NKVD) form a G4 region. The interval 154–156 (ISA) is G5. Residues 206-283 (LGAELPYSVT…HLELWVKVKS (78 aa)) form the KH type-2 domain.

The protein belongs to the TRAFAC class TrmE-Era-EngA-EngB-Septin-like GTPase superfamily. Era GTPase family. As to quaternary structure, monomer.

The protein resides in the cytoplasm. It localises to the cell inner membrane. In terms of biological role, an essential GTPase that binds both GDP and GTP, with rapid nucleotide exchange. Plays a role in 16S rRNA processing and 30S ribosomal subunit biogenesis and possibly also in cell cycle regulation and energy metabolism. The protein is GTPase Era of Cronobacter sakazakii (strain ATCC BAA-894) (Enterobacter sakazakii).